The following is an 88-amino-acid chain: Monensin polyketide synthase acyl carrier protein (88 aa).

The 78-residue stretch at 5-82 (PFTLADLQRI…ELIDHVNERL (78 aa)) folds into the Carrier domain. Ser42 is subject to O-(pantetheine 4'-phosphoryl)serine.

Post-translationally, 4'-phosphopantetheine is transferred from CoA to a specific serine of the apo-ACP-like protein.

It participates in antifungal biosynthesis; monensin biosynthesis. In terms of biological role, acyl carrier protein. This Streptomyces virginiae (Streptomyces cinnamonensis) protein is Monensin polyketide synthase acyl carrier protein.